We begin with the raw amino-acid sequence, 306 residues long: Non-specific ribonucleoside hydrolase RihC (306 aa).

His235 is a catalytic residue.

The protein belongs to the IUNH family. RihC subfamily.

Hydrolyzes both purine and pyrimidine ribonucleosides with a broad-substrate specificity. The polypeptide is Non-specific ribonucleoside hydrolase RihC (Salmonella schwarzengrund (strain CVM19633)).